The chain runs to 129 residues: Histone H2A (129 aa).

Belongs to the histone H2A family. As to quaternary structure, the nucleosome is a histone octamer containing two molecules each of H2A, H2B, H3 and H4 assembled in one H3-H4 heterotetramer and two H2A-H2B heterodimers. The octamer wraps approximately 147 bp of DNA.

Its subcellular location is the nucleus. It is found in the chromosome. In terms of biological role, core component of nucleosome. Nucleosomes wrap and compact DNA into chromatin, limiting DNA accessibility to the cellular machineries which require DNA as a template. Histones thereby play a central role in transcription regulation, DNA repair, DNA replication and chromosomal stability. DNA accessibility is regulated via a complex set of post-translational modifications of histones, also called histone code, and nucleosome remodeling. The polypeptide is Histone H2A (H2A-II) (Chlamydomonas reinhardtii (Chlamydomonas smithii)).